Reading from the N-terminus, the 292-residue chain is Homoserine kinase (292 aa).

An ATP-binding site is contributed by 84–94 (PLSRGLGSSSA).

The protein belongs to the GHMP kinase family. Homoserine kinase subfamily.

Its subcellular location is the cytoplasm. It catalyses the reaction L-homoserine + ATP = O-phospho-L-homoserine + ADP + H(+). Its pathway is amino-acid biosynthesis; L-threonine biosynthesis; L-threonine from L-aspartate: step 4/5. Its function is as follows. Catalyzes the ATP-dependent phosphorylation of L-homoserine to L-homoserine phosphate. The protein is Homoserine kinase of Campylobacter jejuni subsp. jejuni serotype O:2 (strain ATCC 700819 / NCTC 11168).